The primary structure comprises 99 residues: Large ribosomal subunit protein bL27 (99 aa).

Residues 1 to 9 constitute a propeptide that is removed on maturation; the sequence is MLIMNLQLF.

It belongs to the bacterial ribosomal protein bL27 family. Post-translationally, the N-terminus is cleaved by ribosomal processing cysteine protease Prp.

This Clostridium botulinum (strain Alaska E43 / Type E3) protein is Large ribosomal subunit protein bL27.